The following is a 313-amino-acid chain: Syndecan-1 (313 aa).

Residues 1–22 (MRRAALWLWLCALALRLQPALP) form the signal peptide. At 23-257 (QIVTANVPPE…GLLDRKEVLG (235 aa)) the chain is on the extracellular side. 2 disordered regions span residues 27–58 (ANVP…MTLS) and 95–186 (AGEK…VEDG). Acidic residues predominate over residues 32–42 (EDQDGSGDDSD). An O-linked (Xyl...) (chondroitin sulfate) serine glycan is attached at serine 37. A glycan (N-linked (GlcNAc...) asparagine) is linked at asparagine 43. O-linked (Xyl...) (heparan sulfate) serine glycosylation is found at serine 45 and serine 47. Over residues 97–129 (EKPEEGEPVAHVEAEPDFTARDKEKEATTRPRE) the composition is skewed to basic and acidic residues. A compositionally biased stretch (low complexity) spans 135 to 154 (VTQQASTAARATTAQASVTS). Residues serine 209 and serine 219 are each glycosylated (O-linked (Xyl...) (chondroitin sulfate) serine). A helical transmembrane segment spans residues 258 to 278 (GVIAGGLVGLIFAVCLVAFML). Residues 279–313 (YRMKKKDEGSYSLEEPKQANGGAYQKPTKQEEFYA) are Cytoplasmic-facing. Over residues 286-295 (EGSYSLEEPK) the composition is skewed to basic and acidic residues. Residues 286–313 (EGSYSLEEPKQANGGAYQKPTKQEEFYA) form a disordered region. The residue at position 288 (serine 288) is a Phosphoserine.

Belongs to the syndecan proteoglycan family. In terms of assembly, interacts with CDCP1. Interacts (via C-terminus) with TIAM1 (via PDZ domain). Interacts with MDK. In terms of processing, shedding is enhanced by a number of factors such as heparanase, thrombin or EGF. Also by stress and wound healing. PMA-mediated shedding is inhibited by TIMP3.

It is found in the membrane. The protein localises to the secreted. It localises to the extracellular exosome. Cell surface proteoglycan that contains both heparan sulfate and chondroitin sulfate and that links the cytoskeleton to the interstitial matrix. Regulates exosome biogenesis in concert with SDCBP and PDCD6IP. Able to induce its own expression in dental mesenchymal cells and also in the neighboring dental epithelial cells via an MSX1-mediated pathway. The protein is Syndecan-1 of Rattus norvegicus (Rat).